The following is a 404-amino-acid chain: Argininosuccinate synthase (404 aa).

9 to 17 contributes to the ATP binding site; that stretch reads AYSGGLDTS. Tyrosine 86 contributes to the L-citrulline binding site. ATP is bound at residue glycine 116. Positions 118, 122, and 123 each coordinate L-aspartate. Residue asparagine 122 coordinates L-citrulline. Positions 126, 174, 183, 259, and 271 each coordinate L-citrulline.

It belongs to the argininosuccinate synthase family. Type 1 subfamily. Homotetramer.

The protein localises to the cytoplasm. It carries out the reaction L-citrulline + L-aspartate + ATP = 2-(N(omega)-L-arginino)succinate + AMP + diphosphate + H(+). It participates in amino-acid biosynthesis; L-arginine biosynthesis; L-arginine from L-ornithine and carbamoyl phosphate: step 2/3. This is Argininosuccinate synthase from Listeria monocytogenes serovar 1/2a (strain ATCC BAA-679 / EGD-e).